A 462-amino-acid chain; its full sequence is Glutamate-1-semialdehyde 2,1-aminomutase (462 aa).

Residues 178–200 (DDPQRPASPRSQSSRGLPSSPGV) form a disordered region. Low complexity predominate over residues 182–192 (RPASPRSQSSR). Lys-297 is modified (N6-(pyridoxal phosphate)lysine).

The protein belongs to the class-III pyridoxal-phosphate-dependent aminotransferase family. HemL subfamily. As to quaternary structure, homodimer. Requires pyridoxal 5'-phosphate as cofactor.

It is found in the cytoplasm. The enzyme catalyses (S)-4-amino-5-oxopentanoate = 5-aminolevulinate. Its pathway is porphyrin-containing compound metabolism; protoporphyrin-IX biosynthesis; 5-aminolevulinate from L-glutamyl-tRNA(Glu): step 2/2. The polypeptide is Glutamate-1-semialdehyde 2,1-aminomutase (hemL) (Mycobacterium bovis (strain ATCC BAA-935 / AF2122/97)).